A 1057-amino-acid chain; its full sequence is Carbamoyl phosphate synthase large chain (1057 aa).

The tract at residues 1 to 401 (MPKRDDIKTI…SLLKAIRSLE (401 aa)) is carboxyphosphate synthetic domain. 12 residues coordinate ATP: R129, R169, G175, G176, K208, I210, E215, G241, I242, H243, Q284, and E298. Residues 133 to 327 (RTLMNDLNVP…IAKLAAKIAV (195 aa)) enclose the ATP-grasp 1 domain. Residues Q284, E298, and N300 each coordinate Mg(2+). Mn(2+)-binding residues include Q284, E298, and N300. The oligomerization domain stretch occupies residues 402–546 (YGVHHLGLSN…YGTYEYENES (145 aa)). The interval 547 to 929 (IVTDKEKILV…ALYKGLTGSG (383 aa)) is carbamoyl phosphate synthetic domain. One can recognise an ATP-grasp 2 domain in the interval 671 to 861 (EALLREIAVP…MAQLAMRAIM (191 aa)). Positions 707, 746, 748, 752, 777, 778, 779, 780, 820, and 832 each coordinate ATP. Residues Q820, E832, and N834 each coordinate Mg(2+). 3 residues coordinate Mn(2+): Q820, E832, and N834. Residues 930-1057 (FEVKDHGTVL…ESMTFTMRNV (128 aa)) enclose the MGS-like domain. Residues 930–1057 (FEVKDHGTVL…ESMTFTMRNV (128 aa)) are allosteric domain.

It belongs to the CarB family. As to quaternary structure, composed of two chains; the small (or glutamine) chain promotes the hydrolysis of glutamine to ammonia, which is used by the large (or ammonia) chain to synthesize carbamoyl phosphate. Tetramer of heterodimers (alpha,beta)4. Requires Mg(2+) as cofactor. Mn(2+) serves as cofactor.

It catalyses the reaction hydrogencarbonate + L-glutamine + 2 ATP + H2O = carbamoyl phosphate + L-glutamate + 2 ADP + phosphate + 2 H(+). The enzyme catalyses hydrogencarbonate + NH4(+) + 2 ATP = carbamoyl phosphate + 2 ADP + phosphate + 2 H(+). It functions in the pathway amino-acid biosynthesis; L-arginine biosynthesis; carbamoyl phosphate from bicarbonate: step 1/1. Its pathway is pyrimidine metabolism; UMP biosynthesis via de novo pathway; (S)-dihydroorotate from bicarbonate: step 1/3. Large subunit of the glutamine-dependent carbamoyl phosphate synthetase (CPSase). CPSase catalyzes the formation of carbamoyl phosphate from the ammonia moiety of glutamine, carbonate, and phosphate donated by ATP, constituting the first step of 2 biosynthetic pathways, one leading to arginine and/or urea and the other to pyrimidine nucleotides. The large subunit (synthetase) binds the substrates ammonia (free or transferred from glutamine from the small subunit), hydrogencarbonate and ATP and carries out an ATP-coupled ligase reaction, activating hydrogencarbonate by forming carboxy phosphate which reacts with ammonia to form carbamoyl phosphate. In Staphylococcus epidermidis (strain ATCC 12228 / FDA PCI 1200), this protein is Carbamoyl phosphate synthase large chain.